The following is a 276-amino-acid chain: Undecaprenyl-diphosphatase (276 aa).

7 helical membrane passes run 40–60, 98–118, 121–141, 155–175, 200–220, 227–247, and 255–275; these read GLAF…TFFW, WLII…KDAI, IFRG…VLYY, MSFK…FPGI, FLLS…DIAT, VLLA…KLLM, and LDIF…LSVV.

It belongs to the UppP family.

Its subcellular location is the cell membrane. The enzyme catalyses di-trans,octa-cis-undecaprenyl diphosphate + H2O = di-trans,octa-cis-undecaprenyl phosphate + phosphate + H(+). In terms of biological role, catalyzes the dephosphorylation of undecaprenyl diphosphate (UPP). The sequence is that of Undecaprenyl-diphosphatase from Methanosphaera stadtmanae (strain ATCC 43021 / DSM 3091 / JCM 11832 / MCB-3).